The primary structure comprises 224 residues: Dickkopf-related protein 4 (224 aa).

An N-terminal signal peptide occupies residues 1–18; sequence MVAAVLLGLSWLCSPLGA. Residues 41 to 90 form a DKK-type Cys-1 region; the sequence is CLSDTDCNTRKFCLQPRDEKPFCATCRGLRRRCQRDAMCCPGTLCVNDVC. A disordered region spans residues 109–139; sequence GTHAEGTTGHPVQENQPKRKPSIKKSQGRKG. Positions 126–136 are enriched in basic residues; that stretch reads KRKPSIKKSQG. Disulfide bonds link Cys145-Cys157, Cys151-Cys166, Cys156-Cys194, Cys176-Cys202, and Cys196-Cys218. A DKK-type Cys-2 region spans residues 145 to 218; that stretch reads CLRTFDCGPG…NRQHARLRVC (74 aa).

This sequence belongs to the dickkopf family. Interacts with LRP5 and LRP6. Post-translationally, appears to be not glycosylated. Can be proteolytically processed by a furin-like protease. As to expression, expressed in cerebellum, T-cells, esophagus and lung.

Its subcellular location is the secreted. Antagonizes canonical Wnt signaling by inhibiting LRP5/6 interaction with Wnt and by forming a ternary complex with the transmembrane protein KREMEN that promotes internalization of LRP5/6. DKKs play an important role in vertebrate development, where they locally inhibit Wnt regulated processes such as antero-posterior axial patterning, limb development, somitogenesis and eye formation. In the adult, Dkks are implicated in bone formation and bone disease, cancer and Alzheimer disease. The chain is Dickkopf-related protein 4 (DKK4) from Homo sapiens (Human).